Consider the following 410-residue polypeptide: Metacaspase-1 (410 aa).

Positions 1–94 (MFPGSGRQTY…RQSGAMNDVS (94 aa)) are disordered. Composition is skewed to low complexity over residues 21–47 (APQYNYGPPQGPPQGYYNGPPQGYNGP) and 55–64 (NYNYGHYGPP). Positions 65–75 (QGQGQGYGQGG) are enriched in gly residues. The span at 80 to 94 (MYNNNRQSGAMNDVS) shows a compositional bias: polar residues. Catalysis depends on residues histidine 200 and cysteine 256.

The protein belongs to the peptidase C14B family.

Its function is as follows. Involved in cell death (apoptosis). This is Metacaspase-1 (MCA1) from Meyerozyma guilliermondii (strain ATCC 6260 / CBS 566 / DSM 6381 / JCM 1539 / NBRC 10279 / NRRL Y-324) (Yeast).